We begin with the raw amino-acid sequence, 148 residues long: Small ribosomal subunit protein uS13 (148 aa).

It belongs to the universal ribosomal protein uS13 family. Part of the 30S ribosomal subunit. Forms a loose heterodimer with protein S19. Forms two bridges to the 50S subunit in the 70S ribosome.

Functionally, located at the top of the head of the 30S subunit, it contacts several helices of the 16S rRNA. In the 70S ribosome it contacts the 23S rRNA (bridge B1a) and protein L5 of the 50S subunit (bridge B1b), connecting the 2 subunits; these bridges are implicated in subunit movement. The chain is Small ribosomal subunit protein uS13 from Pyrococcus abyssi (strain GE5 / Orsay).